A 458-amino-acid chain; its full sequence is ATP synthase subunit beta (458 aa).

148–155 (GGAGVGKT) provides a ligand contact to ATP.

This sequence belongs to the ATPase alpha/beta chains family. As to quaternary structure, F-type ATPases have 2 components, CF(1) - the catalytic core - and CF(0) - the membrane proton channel. CF(1) has five subunits: alpha(3), beta(3), gamma(1), delta(1), epsilon(1). CF(0) has three main subunits: a(1), b(2) and c(9-12). The alpha and beta chains form an alternating ring which encloses part of the gamma chain. CF(1) is attached to CF(0) by a central stalk formed by the gamma and epsilon chains, while a peripheral stalk is formed by the delta and b chains.

Its subcellular location is the cell inner membrane. The catalysed reaction is ATP + H2O + 4 H(+)(in) = ADP + phosphate + 5 H(+)(out). Produces ATP from ADP in the presence of a proton gradient across the membrane. The catalytic sites are hosted primarily by the beta subunits. This chain is ATP synthase subunit beta, found in Francisella tularensis subsp. mediasiatica (strain FSC147).